Reading from the N-terminus, the 279-residue chain is Oxygen-dependent coproporphyrinogen-III oxidase (279 aa).

Substrate is bound at residue serine 102. Residues histidine 106 and histidine 116 each coordinate a divalent metal cation. Histidine 116 (proton donor) is an active-site residue. 118–120 is a substrate binding site; that stretch reads NTR. The a divalent metal cation site is built by histidine 149 and histidine 179. The interval 244–279 is important for dimerization; that stretch reads YVEFNLLYDRGTKFGLMTDGNVEAILMSLPPEVKFN.

Belongs to the aerobic coproporphyrinogen-III oxidase family. In terms of assembly, homodimer. It depends on a divalent metal cation as a cofactor.

Its subcellular location is the cytoplasm. It catalyses the reaction coproporphyrinogen III + O2 + 2 H(+) = protoporphyrinogen IX + 2 CO2 + 2 H2O. Its pathway is porphyrin-containing compound metabolism; protoporphyrin-IX biosynthesis; protoporphyrinogen-IX from coproporphyrinogen-III (O2 route): step 1/1. In terms of biological role, involved in the heme biosynthesis. Catalyzes the aerobic oxidative decarboxylation of propionate groups of rings A and B of coproporphyrinogen-III to yield the vinyl groups in protoporphyrinogen-IX. The polypeptide is Oxygen-dependent coproporphyrinogen-III oxidase (Rickettsia africae (strain ESF-5)).